The sequence spans 302 residues: tRNA-cytidine(32) 2-sulfurtransferase (302 aa).

The PP-loop motif signature appears at 45-50 (SGGKDS). [4Fe-4S] cluster is bound by residues Cys120, Cys123, and Cys211.

It belongs to the TtcA family. As to quaternary structure, homodimer. The cofactor is Mg(2+). [4Fe-4S] cluster serves as cofactor.

Its subcellular location is the cytoplasm. The enzyme catalyses cytidine(32) in tRNA + S-sulfanyl-L-cysteinyl-[cysteine desulfurase] + AH2 + ATP = 2-thiocytidine(32) in tRNA + L-cysteinyl-[cysteine desulfurase] + A + AMP + diphosphate + H(+). It functions in the pathway tRNA modification. In terms of biological role, catalyzes the ATP-dependent 2-thiolation of cytidine in position 32 of tRNA, to form 2-thiocytidine (s(2)C32). The sulfur atoms are provided by the cysteine/cysteine desulfurase (IscS) system. This Aeromonas hydrophila subsp. hydrophila (strain ATCC 7966 / DSM 30187 / BCRC 13018 / CCUG 14551 / JCM 1027 / KCTC 2358 / NCIMB 9240 / NCTC 8049) protein is tRNA-cytidine(32) 2-sulfurtransferase.